We begin with the raw amino-acid sequence, 258 residues long: Neurotrophin-3 (258 aa).

Positions 1–18 are cleaved as a signal peptide; the sequence is MSILFYVIFLAYLRGIQG. A propeptide spanning residues 19–139 is cleaved from the precursor; sequence NNMDQRSLPE…TNRTSPRRKR (121 aa). The disordered stretch occupies residues 60–85; that stretch reads QSTLPKAEAPREPEQGEATRSEFQPM. Residues 67-79 are compositionally biased toward basic and acidic residues; that stretch reads EAPREPEQGEATR. An N-linked (GlcNAc...) asparagine glycan is attached at Asn-131. Cystine bridges form between Cys-153/Cys-218, Cys-196/Cys-247, and Cys-206/Cys-249.

This sequence belongs to the NGF-beta family. In terms of tissue distribution, brain and peripheral tissues.

Its subcellular location is the secreted. Seems to promote the survival of visceral and proprioceptive sensory neurons. This is Neurotrophin-3 (Ntf3) from Rattus norvegicus (Rat).